Consider the following 163-residue polypeptide: MAETKKMIILKSSDGESFEIEEAVAVKSQTIKHMIEDDCADNGIPLPNVTGAILAKVIEYCKKHVEAAAEAGGDKDFYGSAENDELKNWDSEFVKVDQPTLFDLILAANYLNIGGLLDLTCKAVADQMRGKTPEQMRAHFNIKNDYTPEEEAEVRNENKWAFE.

Residues 105 to 163 (ILAANYLNIGGLLDLTCKAVADQMRGKTPEQMRAHFNIKNDYTPEEEAEVRNENKWAFE) form an interaction with the F-box domain of F-box proteins region.

This sequence belongs to the SKP1 family. As to quaternary structure, part of a SCF (SKP1-cullin-F-box) protein ligase complex. Interacts with At1g56610, At1g67340, At3g62230, At3g59000, At4g27050, At1g55000, SKIP16 and SKIP32. As to expression, mostly expressed in inflorescence and siliques, and, to a lower extent, in seedlings, roots, and stems.

It is found in the nucleus. The protein operates within protein modification; protein ubiquitination. Functionally, involved in ubiquitination and subsequent proteasomal degradation of target proteins. Together with CUL1, RBX1 and a F-box protein, it forms a SCF E3 ubiquitin ligase complex. The functional specificity of this complex depends on the type of F-box protein. In the SCF complex, it serves as an adapter that links the F-box protein to CUL1. The polypeptide is SKP1-like protein 4 (ASK4) (Arabidopsis thaliana (Mouse-ear cress)).